Consider the following 474-residue polypeptide: Dihydrolipoyl dehydrogenase (474 aa).

Residues 36-44, K53, and G119 contribute to the FAD site; that span reads EAKDMGGTC. The cysteines at positions 44 and 49 are disulfide-linked. Residues 184 to 188, E207, and 275 to 278 each bind NAD(+); these read GSGYI and ATGR. Positions 323 and 331 each coordinate FAD. H459 serves as the catalytic Proton acceptor.

The protein belongs to the class-I pyridine nucleotide-disulfide oxidoreductase family. As to quaternary structure, homodimer. FAD serves as cofactor.

It localises to the cell inner membrane. It carries out the reaction N(6)-[(R)-dihydrolipoyl]-L-lysyl-[protein] + NAD(+) = N(6)-[(R)-lipoyl]-L-lysyl-[protein] + NADH + H(+). In terms of biological role, lipoamide dehydrogenase is a component of the alpha-ketoacid dehydrogenase complexes. The protein is Dihydrolipoyl dehydrogenase (lpdA) of Synechocystis sp. (strain ATCC 27184 / PCC 6803 / Kazusa).